The sequence spans 484 residues: Pentatricopeptide repeat-containing protein At1g09190 (484 aa).

PPR repeat units lie at residues asparagine 66 to alanine 100, aspartate 101 to arginine 135, leucine 136 to arginine 166, asparagine 167 to arginine 197, serine 198 to proline 232, aspartate 233 to lysine 267, phenylalanine 269 to arginine 299, asparagine 300 to alanine 334, asparagine 336 to arginine 366, and arginine 372 to alanine 406. The type E motif stretch occupies residues methionine 407–valine 482.

It belongs to the PPR family. PCMP-E subfamily.

The polypeptide is Pentatricopeptide repeat-containing protein At1g09190 (PCMP-E70) (Arabidopsis thaliana (Mouse-ear cress)).